Consider the following 450-residue polypeptide: Perilipin-2 (450 aa).

A2 is modified (N-acetylalanine). S215 is subject to Phosphoserine. Y232 is modified (phosphotyrosine). A disordered region spans residues 411–450; it reads ESESAQAPGTTRRPGRWSRKHPKPVPVSNAEGSQPDDSSS. Positions 423 to 433 are enriched in basic residues; it reads RPGRWSRKHPK. Polar residues predominate over residues 440–450; sequence AEGSQPDDSSS.

It belongs to the perilipin family. Interacts with IRGC. In terms of processing, acylated; primarily with C14, C16 and C18 fatty acids. Post-translationally, phosphorylation at Tyr-232 by isoform 1 of CHKA (CHKalpha2) promotes dissociation from lipid droplets: dissociation is followed by recruitment of autophagosome machinery to lipid droplets and subsequent lipid droplet lipolysis. Polyubiquitination of Nt-acetylatable A-PLIN2 by MARCHF6 lead to degradation by 26S proteasomes. In terms of tissue distribution, milk lipid globules.

It localises to the membrane. Its subcellular location is the lipid droplet. In terms of biological role, structural component of lipid droplets, which is required for the formation and maintenance of lipid storage droplets. This is Perilipin-2 (PLIN2) from Bos taurus (Bovine).